The primary structure comprises 397 residues: MRQILVLLLFATLVYGLIRVPLKRQKSIRKTLKEKGKLSHIWTQQGIDMVQYTDSCSNDQAPSEPLINYMDVEYFGEISVGTPPQNFTVIFDTGSSNLWVPSVYCISQACAQHDRFQPQLSSTYESNGNNFSLQYGTGSLSGVIGIDAVTVEGILVQNQQFGESVSEPGSTFVDAEFDGILGLGYPSIAVGDCTPVFDNMIAQNLVELPMFSVYMSRNPNSAVGGELVFGGFDASRFSGQLNWVPVTNQGYWQIQLDNVQINGEVLFCSGGCQAIVDTGTSLITGPSSDIVQLQNIIGASAANGDYEVDCSVLNEMPTVTFTINGIGYQMTPQQYTLQDGGGVCSSGFQGLDIPPPAGPLWILGDVFIGQYYSVFDRGNNRVGLAPVVPYPPLKNGV.

The signal sequence occupies residues 1-16 (MRQILVLLLFATLVYG). Residues 17–52 (LIRVPLKRQKSIRKTLKEKGKLSHIWTQQGIDMVQY) constitute a propeptide, activation peptide. The 312-residue stretch at 74–385 (YFGEISVGTP…DRGNNRVGLA (312 aa)) folds into the Peptidase A1 domain. N-linked (GlcNAc...) asparagine glycosylation occurs at asparagine 86. Aspartate 92 is a catalytic residue. A disulfide bond links cysteine 105 and cysteine 110. Asparagine 130 is a glycosylation site (N-linked (GlcNAc...) asparagine). Cysteine 268 and cysteine 272 are oxidised to a cystine. Aspartate 277 is an active-site residue. An intrachain disulfide couples cysteine 310 to cysteine 344.

Belongs to the peptidase A1 family. In terms of assembly, homodimer; disulfide-linked. Glycosylated. Contains high mannose-type oligosaccharide. As to expression, expressed predominantly in the larval foregut and the anterior and posterior adult stomach.

It localises to the endosome. The catalysed reaction is Similar to cathepsin D, but slightly broader specificity.. Functionally, may have a role in immune function. Probably involved in the processing of antigenic peptides during MHC class II-mediated antigen presentation. In Xenopus laevis (African clawed frog), this protein is Cathepsin E-A (ctse-a).